Consider the following 88-residue polypeptide: UPF0250 protein Shal_3239 (88 aa).

The protein belongs to the UPF0250 family.

In Shewanella halifaxensis (strain HAW-EB4), this protein is UPF0250 protein Shal_3239.